We begin with the raw amino-acid sequence, 82 residues long: Large ribosomal subunit protein bL27 (82 aa).

The interval 1–21 (MAHKKGASSSRNGRDSNAKRL) is disordered.

It belongs to the bacterial ribosomal protein bL27 family.

The polypeptide is Large ribosomal subunit protein bL27 (Tropheryma whipplei (strain TW08/27) (Whipple's bacillus)).